Reading from the N-terminus, the 152-residue chain is SsrA-binding protein (152 aa).

Belongs to the SmpB family.

The protein localises to the cytoplasm. In terms of biological role, required for rescue of stalled ribosomes mediated by trans-translation. Binds to transfer-messenger RNA (tmRNA), required for stable association of tmRNA with ribosomes. tmRNA and SmpB together mimic tRNA shape, replacing the anticodon stem-loop with SmpB. tmRNA is encoded by the ssrA gene; the 2 termini fold to resemble tRNA(Ala) and it encodes a 'tag peptide', a short internal open reading frame. During trans-translation Ala-aminoacylated tmRNA acts like a tRNA, entering the A-site of stalled ribosomes, displacing the stalled mRNA. The ribosome then switches to translate the ORF on the tmRNA; the nascent peptide is terminated with the 'tag peptide' encoded by the tmRNA and targeted for degradation. The ribosome is freed to recommence translation, which seems to be the essential function of trans-translation. The protein is SsrA-binding protein of Rickettsia rickettsii.